The following is a 413-amino-acid chain: Methylaspartate ammonia-lyase (413 aa).

Q172 serves as a coordination point for (2S,3S)-3-methyl-L-aspartate. Positions 238, 273, and 307 each coordinate Mg(2+). Q329 contributes to the (2S,3S)-3-methyl-L-aspartate binding site. K331 serves as the catalytic Proton acceptor. 360-361 (TC) contributes to the (2S,3S)-3-methyl-L-aspartate binding site.

It belongs to the methylaspartate ammonia-lyase family. Homodimer. The cofactor is Mg(2+).

It carries out the reaction (2S,3S)-3-methyl-L-aspartate = mesaconate + NH4(+). The protein operates within amino-acid degradation; L-glutamate degradation via mesaconate pathway; acetate and pyruvate from L-glutamate: step 2/4. Functionally, involved in the methylaspartate cycle. Catalyzes the formation of the alpha,beta-unsaturated bond by the reversible anti elimination of ammonia from L-threo-beta-methylaspartate (L-threo-(2S,3S)-3-methylaspartate) to give mesaconate. The protein is Methylaspartate ammonia-lyase of Citrobacter amalonaticus.